Consider the following 231-residue polypeptide: Eukaryotic translation initiation factor 4E allele Eva1 (231 aa).

Basic and acidic residues predominate over residues 1 to 20 (MAAAEMERTTSFDAAEKLKA). The tract at residues 1 to 34 (MAAAEMERTTSFDAAEKLKAADAGGGEVDDELEE) is disordered. EIF4G-binding regions lie at residues 56-59 (HPLE) and 66-102 (FDNP…NNIH). MRNA is bound by residues 74–79 (RQIDWG), Lys106, and 124–125 (WE). The cysteines at positions 129 and 167 are disulfide-linked. The interval 150–159 (YTLLAMIGHQ) is EIF4G-binding. Residues 174–179 (RVKGEK) and 219–223 (KRLDR) each bind mRNA.

Belongs to the eukaryotic initiation factor 4E family. EIF4F is a multi-subunit complex, the composition of which varies with external and internal environmental conditions. It is composed of at least EIF4A, EIF4E and EIF4G. EIF4E is also known to interact with other partners. In higher plants two isoforms of EIF4F have been identified, named isoform EIF4F and isoform EIF(iso)4F. Isoform EIF4F has subunits p220 and p26, whereas isoform EIF(iso)4F has subunits p82 and p28. As to quaternary structure, (Microbial infection) Interacts with potyvirus viral genome-linked protein (VPg); this interaction is possible in susceptible hosts but impaired in resistant plants. According to the redox status, the Cys-129-Cys-167 disulfide bridge may have a role in regulating protein function by affecting its ability to bind capped mRNA.

Its subcellular location is the nucleus. The protein localises to the cytoplasm. Its function is as follows. Component of the protein complex eIF4F, which is involved in the recognition of the mRNA cap, ATP-dependent unwinding of 5'-terminal secondary structure and recruitment of mRNA to the ribosome. Recognizes and binds the 7-methylguanosine-containing mRNA cap during an early step in the initiation of protein synthesis and facilitates ribosome binding by inducing the unwinding of the mRNAs secondary structures. Key component of recessive resistance to potyviruses. Functionally, (Microbial infection) Susceptibility host factor required for viral infection (e.g. Potato virus Y (PVY)) by recruiting viral RNAs to the host ribosomal complex via an interaction with viral genome-linked protein (VPg). Displayed sequence is the allele Eva1 that confers resistance to potato virus Y (PVY) by failing to interact with the viral VPg protein. This Solanum etuberosum (Wild potato) protein is Eukaryotic translation initiation factor 4E allele Eva1.